The sequence spans 282 residues: Glutamate--LysW ligase ArgX (282 aa).

ATP is bound by residues lysine 87, lysine 127, 131 to 137, and 167 to 178; these read GSWGRLV and QEYIQYKGRDIR. The 187-residue stretch at 91 to 277 folds into the ATP-grasp domain; it reads YSKLYREGIP…VAQKLVEYIK (187 aa). Arginine 192 is a binding site for substrate. Asparagine 202 is a binding site for ATP. Substrate is bound at residue 203 to 204; the sequence is VA. 3 residues coordinate Mg(2+): aspartate 237, glutamate 250, and asparagine 252. Residue 256 to 260 coordinates substrate; it reads EFKGF. The short motif at 259–260 is the GF motif that is essential for ArgX substrate specificity element; sequence GF.

It belongs to the RimK family. LysX subfamily. Homotetramer. Interacts with LysW. Mg(2+) is required as a cofactor.

The catalysed reaction is [amino-group carrier protein]-C-terminal-L-glutamate + L-glutamate + ATP = [amino-group carrier protein]-C-terminal-gamma-(L-glutamyl)-L-glutamate + ADP + phosphate + H(+). The protein operates within amino-acid biosynthesis; L-arginine biosynthesis. Its function is as follows. Catalyzes the ATP-dependent formation of a covalent bond between the amino group of glutamate and the gamma-carboxyl group of the C-terminal glutamate residue in LysW. This chain is Glutamate--LysW ligase ArgX, found in Sulfurisphaera tokodaii (strain DSM 16993 / JCM 10545 / NBRC 100140 / 7) (Sulfolobus tokodaii).